Consider the following 567-residue polypeptide: Malate synthase, glyoxysomal (567 aa).

Arg182 functions as the Proton acceptor in the catalytic mechanism. The active-site Proton donor is Asp468. The Microbody targeting signal signature appears at 565–567 (SKL).

Belongs to the malate synthase family.

The protein localises to the glyoxysome. The catalysed reaction is glyoxylate + acetyl-CoA + H2O = (S)-malate + CoA + H(+). It participates in carbohydrate metabolism; glyoxylate cycle; (S)-malate from isocitrate: step 2/2. This Gossypium hirsutum (Upland cotton) protein is Malate synthase, glyoxysomal.